Reading from the N-terminus, the 202-residue chain is Small ribosomal subunit protein uS4 (202 aa).

The segment at 21-42 is disordered; that stretch reads LSRKSPRRAYPPGQHGQARRKR. The region spanning 90 to 152 is the S4 RNA-binding domain; the sequence is MRLDNTVFRL…DRSRKLVETN (63 aa).

It belongs to the universal ribosomal protein uS4 family. Part of the 30S ribosomal subunit. Contacts protein S5. The interaction surface between S4 and S5 is involved in control of translational fidelity.

One of the primary rRNA binding proteins, it binds directly to 16S rRNA where it nucleates assembly of the body of the 30S subunit. Functionally, with S5 and S12 plays an important role in translational accuracy. The chain is Small ribosomal subunit protein uS4 from Synechocystis sp. (strain ATCC 27184 / PCC 6803 / Kazusa).